The sequence spans 140 residues: Histone H2B.1, sperm (140 aa).

The interval 1–47 is disordered; that stretch reads MPSQRSPTKRSPTKRSPQKGAGKGGKGSKRGGKARRRGGAAVRRRRR. 3 consecutive short sequence motifs (SPKK motif) follow at residues 6–9, 11–14, and 16–19; these read SPTK and SPQK. 2 stretches are compositionally biased toward basic residues: residues 7 to 17 and 26 to 47; these read PTKRSPTKRSP and KGSK…RRRR. Residues serine 11 and serine 16 each carry the phosphoserine modification. Serine 127 carries O-linked (GlcNAc) serine glycosylation. Lysine 135 is covalently cross-linked (Glycyl lysine isopeptide (Lys-Gly) (interchain with G-Cter in ubiquitin)).

This sequence belongs to the histone H2B family. The nucleosome is a histone octamer containing two molecules each of H2A, H2B, H3 and H4 assembled in one H3-H4 heterotetramer and two H2A-H2B heterodimers. The octamer wraps approximately 147 bp of DNA. In terms of processing, monoubiquitination of Lys-135 gives a specific tag for epigenetic transcriptional activation and is also prerequisite for histone H3 'Lys-4' and 'Lys-79' methylation. Post-translationally, phosphorylated on SPKK motifs 2 and 3; which may regulate DNA binding. Dephosphorylated during maturation of spermatids to mature sperm and rephosphorylated at fertilization. GlcNAcylation at Ser-127 promotes monoubiquitination of Lys-135. It fluctuates in response to extracellular glucose, and associates with transcribed genes.

The protein localises to the nucleus. The protein resides in the chromosome. Functionally, core component of nucleosome. Nucleosomes wrap and compact DNA into chromatin, limiting DNA accessibility to the cellular machineries which require DNA as a template. Histones thereby play a central role in transcription regulation, DNA repair, DNA replication and chromosomal stability. DNA accessibility is regulated via a complex set of post-translational modifications of histones, also called histone code, and nucleosome remodeling. The polypeptide is Histone H2B.1, sperm (Strongylocentrotus purpuratus (Purple sea urchin)).